The chain runs to 510 residues: Glycosyl hydrolase YngK (510 aa).

The N-terminal stretch at 1-30 (MKVCQKSIVRFLVSLIIGTFVISVPFMANA) is a signal peptide.

It belongs to the glycosyl hydrolase-like 10 (GHL10) family.

This chain is Glycosyl hydrolase YngK (yngK), found in Bacillus subtilis (strain 168).